Consider the following 207-residue polypeptide: Claudin-11 (207 aa).

Methionine 1 is a topological domain (cytoplasmic). The chain crosses the membrane as a helical span at residues 2–22 (VATCLQVVGFVTSFVGWIGVI). At 23–82 (VTTSTNDWVVTCGYTIPTCRKLDELGSKGLWADCVMATGLYHCKPLVDILILPGYVQACR) the chain is on the extracellular side. The chain crosses the membrane as a helical span at residues 83-103 (ALMIAASVLGLPAILLLLTVL). The Cytoplasmic segment spans residues 104 to 122 (PCIRMGQEPGVAKYRRAQL). The helical transmembrane segment at 123–143 (AGVLLILLALCALVATIWFPV) threads the bilayer. The Extracellular segment spans residues 144-157 (CAHRETTIVSFGYS). The helical transmembrane segment at 158 to 178 (LYAGWIGAVLCLVGGCVILCC) threads the bilayer. Residues 179 to 207 (AGDAQAFGENRFYYTAGSSSPTHAKSAHV) are Cytoplasmic-facing. Phosphoserine occurs at positions 197 and 198.

The protein belongs to the claudin family. As to quaternary structure, interacts with tetraspanin-3/TSPAN3. Interacts with OCLN.

It localises to the cell junction. The protein resides in the tight junction. The protein localises to the cell membrane. Plays a major role in tight junction-specific obliteration of the intercellular space, through calcium-independent cell-adhesion activity. The protein is Claudin-11 (CLDN11) of Homo sapiens (Human).